The sequence spans 139 residues: Class I hydrophobin A (139 aa).

The N-terminal stretch at 1 to 18 is a signal peptide; the sequence is MKFSIAAAVLALASAVVA. Disulfide bonds link Cys-45–Cys-113, Cys-53–Cys-107, Cys-54–Cys-88, and Cys-114–Cys-133.

The protein belongs to the fungal hydrophobin family. As to quaternary structure, self-assembles to form functional amyloid fibrils called rodlets. Self-assembly into fibrillar rodlets occurs spontaneously at hydrophobic:hydrophilic interfaces and the rodlets further associate laterally to form amphipathic monolayers.

The protein localises to the secreted. It is found in the cell wall. In terms of biological role, aerial growth, conidiation, and dispersal of filamentous fungi in the environment rely upon a capability of their secreting small amphipathic proteins called hydrophobins (HPBs) with low sequence identity. Class I can self-assemble into an outermost layer of rodlet bundles on aerial cell surfaces, conferring cellular hydrophobicity that supports fungal growth, development and dispersal; whereas Class II form highly ordered films at water-air interfaces through intermolecular interactions but contribute nothing to the rodlet structure. HYPA is a class I hydrophobin that contributes to surface hydrophobicity, and prevents recognition by the cellular immune defense system. The chain is Class I hydrophobin A from Arthroderma benhamiae (strain ATCC MYA-4681 / CBS 112371) (Trichophyton mentagrophytes).